Consider the following 187-residue polypeptide: MKNCMMADQRGRSILQYQPIVGDEALEFSRGLAPSTFGFRYAAYMDRNHFLPSGRTAVKHIADPTLAYVMTRYRQCHDFVHIITGCGRSIEEELAVKIFEWKHTGLPLGLLSLLGGAPRLSAAQWAHIRLYWEWASRNAPSSRHGEPAVPMYLNVPWEDMLAKEYDEVVAYTGITPLPDFLEKRQKH.

4 residues coordinate Zn(2+): His77, Asp78, His81, and Glu93.

This sequence belongs to the COQ4 family. Component of a multi-subunit COQ enzyme complex. Zn(2+) is required as a cofactor.

The protein resides in the mitochondrion inner membrane. It carries out the reaction a 4-hydroxy-3-methoxy-5-(all-trans-polyprenyl)benzoate + H(+) = a 2-methoxy-6-(all-trans-polyprenyl)phenol + CO2. It functions in the pathway cofactor biosynthesis; ubiquinone biosynthesis. Functionally, lyase that catalyzes the C1-decarboxylation of 4-hydroxy-3-methoxy-5-(all-trans-polyprenyl)benzoic acid into 2-methoxy-6-(all-trans-polyprenyl)phenol during ubiquinone biosynthesis. The polypeptide is Ubiquinone biosynthesis protein COQ4 homolog, mitochondrial (Leishmania major).